A 179-amino-acid chain; its full sequence is Acireductone dioxygenase (179 aa).

The Fe(2+) site is built by His97, His99, Glu103, and His141. Ni(2+) contacts are provided by His97, His99, Glu103, and His141.

Belongs to the acireductone dioxygenase (ARD) family. In terms of assembly, monomer. The cofactor is Fe(2+). Requires Ni(2+) as cofactor.

The catalysed reaction is 1,2-dihydroxy-5-(methylsulfanyl)pent-1-en-3-one + O2 = 3-(methylsulfanyl)propanoate + CO + formate + 2 H(+). It carries out the reaction 1,2-dihydroxy-5-(methylsulfanyl)pent-1-en-3-one + O2 = 4-methylsulfanyl-2-oxobutanoate + formate + 2 H(+). The protein operates within amino-acid biosynthesis; L-methionine biosynthesis via salvage pathway; L-methionine from S-methyl-5-thio-alpha-D-ribose 1-phosphate: step 5/6. Catalyzes 2 different reactions between oxygen and the acireductone 1,2-dihydroxy-3-keto-5-methylthiopentene (DHK-MTPene) depending upon the metal bound in the active site. Fe-containing acireductone dioxygenase (Fe-ARD) produces formate and 2-keto-4-methylthiobutyrate (KMTB), the alpha-ketoacid precursor of methionine in the methionine recycle pathway. Ni-containing acireductone dioxygenase (Ni-ARD) produces methylthiopropionate, carbon monoxide and formate, and does not lie on the methionine recycle pathway. The polypeptide is Acireductone dioxygenase (Gluconacetobacter diazotrophicus (strain ATCC 49037 / DSM 5601 / CCUG 37298 / CIP 103539 / LMG 7603 / PAl5)).